Reading from the N-terminus, the 316-residue chain is Protein lifeguard 2 (316 aa).

Residues 1–46 are disordered; the sequence is MTQGKLSVANKAPGTEGQQQANGEKKETPAVPSAPPSYEEATSGEG. Transmembrane regions (helical) follow at residues 106 to 126, 138 to 158, and 165 to 185; these read VYTI…LFTF, PGWY…LACC, and FPWN…LTGM. N191 is a glycosylation site (N-linked (GlcNAc...) asparagine). 4 helical membrane passes run 194 to 214, 225 to 245, 251 to 271, and 290 to 310; these read SVLL…VFSF, GVLF…AILL, PWLH…FLAF, and IFGA…FLQL.

Belongs to the BI1 family. LFG subfamily. Interacts with FAS/TNFRSF6 and BAX.

The protein resides in the cell membrane. Its subcellular location is the membrane raft. It is found in the postsynaptic cell membrane. Functionally, antiapoptotic protein which protects cells uniquely from Fas-induced apoptosis. Regulates Fas-mediated apoptosis in neurons by interfering with caspase-8 activation. Plays a role in cerebellar development by affecting cerebellar size, internal granular layer (IGL) thickness, and Purkinje cell (PC) development. This Bos taurus (Bovine) protein is Protein lifeguard 2 (FAIM2).